Reading from the N-terminus, the 355-residue chain is Tabersonine 16-O-methyltransferase (355 aa).

S-adenosyl-L-methionine is bound by residues 198 to 201 (IGGG), aspartate 222, 222 to 223 (DL), 242 to 243 (DM), and lysine 256. Histidine 260 acts as the Proton acceptor in catalysis.

Belongs to the class I-like SAM-binding methyltransferase superfamily. Cation-independent O-methyltransferase family. COMT subfamily. Homodimer. In terms of tissue distribution, expressed in leaves and flowers. Detected in stems and roots. In leaves, expressed in epidermal cells.

It is found in the cytoplasm. It catalyses the reaction 16-hydroxytabersonine + S-adenosyl-L-methionine = 16-methoxytabersonine + S-adenosyl-L-homocysteine + H(+). It participates in alkaloid biosynthesis; vindoline biosynthesis. Its function is as follows. 16-O-methyltransferase involved in the biosynthesis of vindoline. Highly specific for 16-hydroxytabersonine. No activity with tabersonine, 3-hydroxytyramine, 4-hydroxytyramine, 5-hydroxytryptamine (5HT), 2,3-dihydro-3-hydroxytabersonine, lochnericine, hoerhammericine, 16-hydroxy-2,3-dihydro-3-hydroxytabersonine, 16-hydroxylochnericine, 16-hydroxyhoerhammericine, quercetin, kaempferol and caffeic acid as substrates. This chain is Tabersonine 16-O-methyltransferase, found in Catharanthus roseus (Madagascar periwinkle).